The primary structure comprises 431 residues: Translation initiation factor 2 subunit gamma (431 aa).

The region spanning 26-223 (QPCVNIGMVG…ALETQIPTPS (198 aa)) is the tr-type G domain. The interval 35 to 42 (GHVDHGKT) is G1. Mg(2+)-binding residues include Asp38, Thr42, Gly63, and Ser65. Residue 38–43 (DHGKTT) coordinates GTP. The segment at 63–67 (GISIR) is G2. Zn(2+) contacts are provided by Cys78, Cys81, Cys93, and Cys96. Positions 110 to 113 (DAPG) are G3. GTP is bound by residues 166 to 169 (NKID) and 201 to 203 (SAQ). The tract at residues 166–169 (NKID) is G4. The segment at 201–203 (SAQ) is G5.

It belongs to the TRAFAC class translation factor GTPase superfamily. Classic translation factor GTPase family. EIF2G subfamily. As to quaternary structure, heterotrimer composed of an alpha, a beta and a gamma chain. Mg(2+) serves as cofactor.

It catalyses the reaction GTP + H2O = GDP + phosphate + H(+). Its function is as follows. eIF-2 functions in the early steps of protein synthesis by forming a ternary complex with GTP and initiator tRNA. This is Translation initiation factor 2 subunit gamma from Methanosarcina mazei (strain ATCC BAA-159 / DSM 3647 / Goe1 / Go1 / JCM 11833 / OCM 88) (Methanosarcina frisia).